The following is a 234-amino-acid chain: Thiamine-phosphate synthase (234 aa).

4-amino-2-methyl-5-(diphosphooxymethyl)pyrimidine is bound by residues 65–69 and asparagine 97; that span reads QYRNK. The Mg(2+) site is built by aspartate 98 and aspartate 117. Residue serine 136 participates in 4-amino-2-methyl-5-(diphosphooxymethyl)pyrimidine binding. 2-[(2R,5Z)-2-carboxy-4-methylthiazol-5(2H)-ylidene]ethyl phosphate is bound at residue 163–165; it reads SHT. Position 166 (lysine 166) interacts with 4-amino-2-methyl-5-(diphosphooxymethyl)pyrimidine. Residues glycine 192 and 212–213 each bind 2-[(2R,5Z)-2-carboxy-4-methylthiazol-5(2H)-ylidene]ethyl phosphate; that span reads IS.

The protein belongs to the thiamine-phosphate synthase family. Requires Mg(2+) as cofactor.

The catalysed reaction is 2-[(2R,5Z)-2-carboxy-4-methylthiazol-5(2H)-ylidene]ethyl phosphate + 4-amino-2-methyl-5-(diphosphooxymethyl)pyrimidine + 2 H(+) = thiamine phosphate + CO2 + diphosphate. It carries out the reaction 2-(2-carboxy-4-methylthiazol-5-yl)ethyl phosphate + 4-amino-2-methyl-5-(diphosphooxymethyl)pyrimidine + 2 H(+) = thiamine phosphate + CO2 + diphosphate. The enzyme catalyses 4-methyl-5-(2-phosphooxyethyl)-thiazole + 4-amino-2-methyl-5-(diphosphooxymethyl)pyrimidine + H(+) = thiamine phosphate + diphosphate. The protein operates within cofactor biosynthesis; thiamine diphosphate biosynthesis; thiamine phosphate from 4-amino-2-methyl-5-diphosphomethylpyrimidine and 4-methyl-5-(2-phosphoethyl)-thiazole: step 1/1. In terms of biological role, condenses 4-methyl-5-(beta-hydroxyethyl)thiazole monophosphate (THZ-P) and 2-methyl-4-amino-5-hydroxymethyl pyrimidine pyrophosphate (HMP-PP) to form thiamine monophosphate (TMP). This Xylella fastidiosa (strain Temecula1 / ATCC 700964) protein is Thiamine-phosphate synthase.